The primary structure comprises 637 residues: Protein kinase domain-containing protein ppk3 (637 aa).

The 296-residue stretch at Met1–Ile296 folds into the Protein kinase domain. The stretch at Lys414–Leu450 is one HEAT repeat. The span at Asn576–Asn586 shows a compositional bias: basic and acidic residues. The segment at Asn576 to Leu637 is disordered. Acidic residues predominate over residues Glu608–Val631.

The protein localises to the golgi apparatus. This chain is Protein kinase domain-containing protein ppk3 (ppk3), found in Schizosaccharomyces pombe (strain 972 / ATCC 24843) (Fission yeast).